The primary structure comprises 319 residues: ATP-dependent 6-phosphofructokinase (319 aa).

G11 is a binding site for ATP. R21 to R25 is a binding site for ADP. ATP-binding positions include R72–Y73 and G102–S105. D103 contacts Mg(2+). T125 to D127 lines the substrate pocket. D127 (proton acceptor) is an active-site residue. Position 154 (R154) interacts with ADP. Substrate contacts are provided by residues R162 and M169–R171. ADP contacts are provided by residues G185 to E187, R211, and K213 to H215. Residues E222, R243, and H249–R252 each bind substrate.

This sequence belongs to the phosphofructokinase type A (PFKA) family. ATP-dependent PFK group I subfamily. Prokaryotic clade 'B1' sub-subfamily. As to quaternary structure, homotetramer. Requires Mg(2+) as cofactor.

It localises to the cytoplasm. It carries out the reaction beta-D-fructose 6-phosphate + ATP = beta-D-fructose 1,6-bisphosphate + ADP + H(+). The protein operates within carbohydrate degradation; glycolysis; D-glyceraldehyde 3-phosphate and glycerone phosphate from D-glucose: step 3/4. With respect to regulation, allosterically activated by ADP and other diphosphonucleosides, and allosterically inhibited by phosphoenolpyruvate. Its function is as follows. Catalyzes the phosphorylation of D-fructose 6-phosphate to fructose 1,6-bisphosphate by ATP, the first committing step of glycolysis. This Listeria monocytogenes serotype 4a (strain HCC23) protein is ATP-dependent 6-phosphofructokinase.